The following is a 101-amino-acid chain: Small ribosomal subunit protein uS14m (101 aa).

It belongs to the universal ribosomal protein uS14 family. As to quaternary structure, component of the mitochondrial ribosome small subunit (28S) which comprises a 12S rRNA and about 30 distinct proteins. Interacts with LIAT1.

It is found in the mitochondrion. The sequence is that of Small ribosomal subunit protein uS14m (mrps14) from Dictyostelium citrinum (Slime mold).